The primary structure comprises 471 residues: A-type ATP synthase subunit B (471 aa).

This sequence belongs to the ATPase alpha/beta chains family. Has multiple subunits with at least A(3), B(3), C, D, E, F, H, I and proteolipid K(x).

The protein resides in the cell membrane. Functionally, component of the A-type ATP synthase that produces ATP from ADP in the presence of a proton gradient across the membrane. The B chain is a regulatory subunit. The sequence is that of A-type ATP synthase subunit B from Natronomonas pharaonis (strain ATCC 35678 / DSM 2160 / CIP 103997 / JCM 8858 / NBRC 14720 / NCIMB 2260 / Gabara) (Halobacterium pharaonis).